The following is a 332-amino-acid chain: Melanocortin receptor 4 (332 aa).

Topologically, residues 1–43 are extracellular; sequence MNSTLQHGMHTSLHFWNRSTYGQHSNATESLGKGYPDGGCYEQ. N-linked (GlcNAc...) asparagine glycosylation is found at Asn-2, Asn-17, and Asn-26. 2 cysteine pairs are disulfide-bonded: Cys-40/Cys-279 and Cys-271/Cys-277. Residues 44 to 69 form a helical membrane-spanning segment; it reads LFVSPEVFVTLGVISLLENILVIVAI. The Cytoplasmic segment spans residues 70–81; that stretch reads AKNKNLHSPMYF. A helical membrane pass occupies residues 82 to 106; sequence FICSLAVADMLVSVSNGSETIVITL. Ca(2+) contacts are provided by Glu-100, Asp-122, and Asp-126. At 107–123 the chain is on the extracellular side; sequence LNSTDTDAQSFTVNIDN. The chain crosses the membrane as a helical span at residues 124-145; it reads VIDSVICSSLLASICSLLSIAV. Residues 146–165 lie on the Cytoplasmic side of the membrane; that stretch reads DRYFTIFYALQYHNIMTVRR. Residues 166-186 traverse the membrane as a helical segment; it reads VGIIISCIWAACTVSGILFII. The Extracellular segment spans residues 187 to 191; sequence YSDST. A helical transmembrane segment spans residues 192–215; that stretch reads AVIICLITMFFTMLALMASLYVHM. Topologically, residues 216–248 are cytoplasmic; sequence FLMARLHIKRIAVLPGTGTIRQGANMKGAITLT. A helical transmembrane segment spans residues 249–271; that stretch reads ILIGVFVVCWAPFFLHLIFYISC. Over 272–280 the chain is Extracellular; sequence PQNPYCVCF. Residues 281 to 304 form a helical membrane-spanning segment; sequence MSHFNLYLILIMCNSIIDPLIYAL. Residues 305–332 lie on the Cytoplasmic side of the membrane; that stretch reads RSQELRKTFKEIICCYPLGGLCDLSSRY. Cys-318 carries the S-palmitoyl cysteine lipid modification.

Belongs to the G-protein coupled receptor 1 family. Homodimer; disulfide-linked, also forms higher order oligomers. Interacts with GNAS. Interacts with ATRNL1. Interacts with MGRN1; this interaction competes with GNAS-binding and thus inhibits agonist-induced cAMP production. Interacts with MRAP and MRAP2; these associated factors increase ligand-sensitivity and generation of cAMP.

Its subcellular location is the cell membrane. In terms of biological role, hormone receptor that acts as a key component of the leptin-melanocortin pathway at the intersection of homeostatic maintenance of energetic state. Plays a role in regulating food intake: activation by a stimulating hormone such as anorexigenic alpha-melanocyte stimulating hormone (alpha-MSH) inhibits appetite, whereas binding to a natural antagonist like Agouti-related protein/AGRP promotes appetite. G-protein-coupled receptor that activates conventional Galphas signaling leading to induction of anorexogenic signaling in the hypothalamus to result in negative energy balance. Regulates the firing activity of neurons from the hypothalamus by alpha-MSH and AGRP independently of Galphas signaling by ligand-induced coupling of closure of inwardly rectifying potassium channel KCNJ13. In intestinal epithelial cells, plays a role in the inhibition of hepatic glucose production via nesfatin-1/NUCB2 leading to increased cyclic adenosine monophosphate (cAMP) levels and glucagon-like peptide 1 (GLP-1) secretion in the intestinal epithelium. The protein is Melanocortin receptor 4 (MC4R) of Vulpes vulpes (Red fox).